The sequence spans 345 residues: Biotin synthase (345 aa).

The Radical SAM core domain occupies 38-256 (RQVQVSTLLS…IAVARIMMPS (219 aa)). [4Fe-4S] cluster contacts are provided by cysteine 53, cysteine 57, and cysteine 60. [2Fe-2S] cluster-binding residues include cysteine 97, cysteine 128, cysteine 188, and arginine 260.

It belongs to the radical SAM superfamily. Biotin synthase family. In terms of assembly, homodimer. Requires [4Fe-4S] cluster as cofactor. [2Fe-2S] cluster serves as cofactor.

The enzyme catalyses (4R,5S)-dethiobiotin + (sulfur carrier)-SH + 2 reduced [2Fe-2S]-[ferredoxin] + 2 S-adenosyl-L-methionine = (sulfur carrier)-H + biotin + 2 5'-deoxyadenosine + 2 L-methionine + 2 oxidized [2Fe-2S]-[ferredoxin]. It functions in the pathway cofactor biosynthesis; biotin biosynthesis; biotin from 7,8-diaminononanoate: step 2/2. Catalyzes the conversion of dethiobiotin (DTB) to biotin by the insertion of a sulfur atom into dethiobiotin via a radical-based mechanism. This is Biotin synthase from Yersinia pseudotuberculosis serotype O:1b (strain IP 31758).